The primary structure comprises 315 residues: Cobalamin biosynthesis protein CobD (315 aa).

The next 5 helical transmembrane spans lie at 54–74, 78–98, 152–172, 203–223, and 295–315; these read GLLF…ILFL, IAYW…LAMT, ADGV…LALM, IANF…SFIL, and LLYT…LLLF.

The protein belongs to the CobD/CbiB family.

It localises to the cell membrane. The protein operates within cofactor biosynthesis; adenosylcobalamin biosynthesis. Functionally, converts cobyric acid to cobinamide by the addition of aminopropanol on the F carboxylic group. The polypeptide is Cobalamin biosynthesis protein CobD (Listeria monocytogenes serotype 4b (strain F2365)).